The primary structure comprises 463 residues: Phosphoglucosamine mutase (463 aa).

Serine 108 acts as the Phosphoserine intermediate in catalysis. Mg(2+) contacts are provided by serine 108, aspartate 247, aspartate 249, and aspartate 251. Serine 108 carries the post-translational modification Phosphoserine.

The protein belongs to the phosphohexose mutase family. Mg(2+) is required as a cofactor. Post-translationally, activated by phosphorylation.

It catalyses the reaction alpha-D-glucosamine 1-phosphate = D-glucosamine 6-phosphate. Functionally, catalyzes the conversion of glucosamine-6-phosphate to glucosamine-1-phosphate. This chain is Phosphoglucosamine mutase, found in Nitrosospira multiformis (strain ATCC 25196 / NCIMB 11849 / C 71).